We begin with the raw amino-acid sequence, 112 residues long: Tyrosine-protein phosphatase 7 (112 aa).

The Tyrosine-protein phosphatase domain maps to Asn1–Val112. Asp82 lines the substrate pocket.

It belongs to the protein-tyrosine phosphatase family.

It carries out the reaction O-phospho-L-tyrosyl-[protein] + H2O = L-tyrosyl-[protein] + phosphate. The protein is Tyrosine-protein phosphatase 7 (STY-7) of Styela plicata (Wrinkled sea squirt).